A 58-amino-acid polypeptide reads, in one-letter code: UPF0391 membrane protein Sbal_1421 (58 aa).

The next 2 membrane-spanning stretches (helical) occupy residues 6 to 26 and 28 to 48; these read LVFL…IAGA and AGIA…SLLV.

This sequence belongs to the UPF0391 family.

The protein resides in the cell membrane. The protein is UPF0391 membrane protein Sbal_1421 of Shewanella baltica (strain OS155 / ATCC BAA-1091).